A 145-amino-acid chain; its full sequence is uncharacterized protein (145 aa).

Residues 1–20 form the signal peptide; the sequence is MPSKVCTLILLFSVINQMKC.

This is an uncharacterized protein from Caenorhabditis elegans.